We begin with the raw amino-acid sequence, 216 residues long: Imidazole glycerol phosphate synthase subunit HisH (216 aa).

Residues 2 to 216 (RVAIIDYGSG…LIANFLKWKP (215 aa)) form the Glutamine amidotransferase type-1 domain. Cys-88 acts as the Nucleophile in catalysis. Active-site residues include His-196 and Glu-198.

As to quaternary structure, heterodimer of HisH and HisF.

It localises to the cytoplasm. The catalysed reaction is 5-[(5-phospho-1-deoxy-D-ribulos-1-ylimino)methylamino]-1-(5-phospho-beta-D-ribosyl)imidazole-4-carboxamide + L-glutamine = D-erythro-1-(imidazol-4-yl)glycerol 3-phosphate + 5-amino-1-(5-phospho-beta-D-ribosyl)imidazole-4-carboxamide + L-glutamate + H(+). It carries out the reaction L-glutamine + H2O = L-glutamate + NH4(+). It participates in amino-acid biosynthesis; L-histidine biosynthesis; L-histidine from 5-phospho-alpha-D-ribose 1-diphosphate: step 5/9. IGPS catalyzes the conversion of PRFAR and glutamine to IGP, AICAR and glutamate. The HisH subunit catalyzes the hydrolysis of glutamine to glutamate and ammonia as part of the synthesis of IGP and AICAR. The resulting ammonia molecule is channeled to the active site of HisF. The protein is Imidazole glycerol phosphate synthase subunit HisH of Brucella suis biovar 1 (strain 1330).